We begin with the raw amino-acid sequence, 194 residues long: Peptidyl-tRNA hydrolase (194 aa).

Tyr17 is a tRNA binding site. The active-site Proton acceptor is the His22. The tRNA site is built by Tyr68, Asn70, and Asn116.

This sequence belongs to the PTH family. Monomer.

Its subcellular location is the cytoplasm. It catalyses the reaction an N-acyl-L-alpha-aminoacyl-tRNA + H2O = an N-acyl-L-amino acid + a tRNA + H(+). Functionally, hydrolyzes ribosome-free peptidyl-tRNAs (with 1 or more amino acids incorporated), which drop off the ribosome during protein synthesis, or as a result of ribosome stalling. In terms of biological role, catalyzes the release of premature peptidyl moieties from peptidyl-tRNA molecules trapped in stalled 50S ribosomal subunits, and thus maintains levels of free tRNAs and 50S ribosomes. This Pseudomonas syringae pv. syringae (strain B728a) protein is Peptidyl-tRNA hydrolase.